Reading from the N-terminus, the 62-residue chain is Large ribosomal subunit protein uL29 (62 aa).

This sequence belongs to the universal ribosomal protein uL29 family.

This chain is Large ribosomal subunit protein uL29, found in Acholeplasma laidlawii (strain PG-8A).